Here is a 263-residue protein sequence, read N- to C-terminus: Coiled-coil domain-containing protein 172 (263 aa).

A coiled-coil region spans residues 13–191; the sequence is TEHQAEESRR…LKVLKDEETE (179 aa).

Belongs to the CCDC172 family. As to quaternary structure, may interact with TEKT2. Detected in spermatozoa (at protein level). Predominantly expressed in testis and in spermatozoa from the caput and corpus epididymis.

It is found in the cytoplasm. The protein localises to the cell projection. The protein resides in the cilium. This chain is Coiled-coil domain-containing protein 172 (Ccdc172), found in Rattus norvegicus (Rat).